A 550-amino-acid polypeptide reads, in one-letter code: Eukaryotic translation initiation factor 3 subunit L (550 aa).

The segment at 1–20 (MVRDSFDGGHTGDPERDLAY) is disordered. The 195-residue stretch at 309 to 503 (EATKIFVNCL…IDDSTTDLDF (195 aa)) folds into the PCI domain.

Belongs to the eIF-3 subunit L family. As to quaternary structure, component of the eukaryotic translation initiation factor 3 (eIF-3) complex.

It is found in the cytoplasm. Functionally, component of the eukaryotic translation initiation factor 3 (eIF-3) complex, which is involved in protein synthesis of a specialized repertoire of mRNAs and, together with other initiation factors, stimulates binding of mRNA and methionyl-tRNAi to the 40S ribosome. The eIF-3 complex specifically targets and initiates translation of a subset of mRNAs involved in cell proliferation. In Brugia malayi (Filarial nematode worm), this protein is Eukaryotic translation initiation factor 3 subunit L.